Reading from the N-terminus, the 169-residue chain is Unfolded protein response-inducible protein 1 (169 aa).

Functionally, involved in the unfolded protein response (UPR), a transcriptional response which up-regulates genes that enable cells to cope with misfolded, endoplasmic reticulum-retained proteins. UPR is part of the endoplasmic reticulum quality control (ERQC) which prevents the exit of misfolded secretory and membrane proteins from the endoplasmic reticulum. The sequence is that of Unfolded protein response-inducible protein 1 (ULI1) from Saccharomyces cerevisiae (strain ATCC 204508 / S288c) (Baker's yeast).